Reading from the N-terminus, the 186-residue chain is GTP cyclohydrolase 1 (186 aa).

Cys-78, His-81, and Cys-150 together coordinate Zn(2+).

The protein belongs to the GTP cyclohydrolase I family. Toroid-shaped homodecamer, composed of two pentamers of five dimers.

The enzyme catalyses GTP + H2O = 7,8-dihydroneopterin 3'-triphosphate + formate + H(+). Its pathway is cofactor biosynthesis; 7,8-dihydroneopterin triphosphate biosynthesis; 7,8-dihydroneopterin triphosphate from GTP: step 1/1. The chain is GTP cyclohydrolase 1 from Enterococcus faecalis (strain ATCC 700802 / V583).